The chain runs to 269 residues: Tryptophan synthase alpha chain (269 aa).

Residues Glu-49 and Asp-60 each act as proton acceptor in the active site.

This sequence belongs to the TrpA family. As to quaternary structure, tetramer of two alpha and two beta chains.

The enzyme catalyses (1S,2R)-1-C-(indol-3-yl)glycerol 3-phosphate + L-serine = D-glyceraldehyde 3-phosphate + L-tryptophan + H2O. It participates in amino-acid biosynthesis; L-tryptophan biosynthesis; L-tryptophan from chorismate: step 5/5. The alpha subunit is responsible for the aldol cleavage of indoleglycerol phosphate to indole and glyceraldehyde 3-phosphate. This chain is Tryptophan synthase alpha chain, found in Acidovorax ebreus (strain TPSY) (Diaphorobacter sp. (strain TPSY)).